We begin with the raw amino-acid sequence, 351 residues long: N-acetyl-gamma-glutamyl-phosphate reductase (351 aa).

The active site involves Cys-154.

The protein belongs to the NAGSA dehydrogenase family. Type 1 subfamily.

It localises to the cytoplasm. The catalysed reaction is N-acetyl-L-glutamate 5-semialdehyde + phosphate + NADP(+) = N-acetyl-L-glutamyl 5-phosphate + NADPH + H(+). It functions in the pathway amino-acid biosynthesis; L-arginine biosynthesis; N(2)-acetyl-L-ornithine from L-glutamate: step 3/4. Its function is as follows. Catalyzes the NADPH-dependent reduction of N-acetyl-5-glutamyl phosphate to yield N-acetyl-L-glutamate 5-semialdehyde. This chain is N-acetyl-gamma-glutamyl-phosphate reductase, found in Prochlorococcus marinus (strain AS9601).